The primary structure comprises 384 residues: Queuine tRNA-ribosyltransferase (384 aa).

Residue Asp93 is the Proton acceptor of the active site. Residues 93-97 (DSGGF), Asp147, Gln202, and Gly229 contribute to the substrate site. Residues 260 to 266 (GVGYPEE) are RNA binding. Asp279 acts as the Nucleophile in catalysis. The RNA binding; important for wobble base 34 recognition stretch occupies residues 284–288 (TRAAR). The Zn(2+) site is built by Cys317, Cys319, Cys322, and His348.

Belongs to the queuine tRNA-ribosyltransferase family. In terms of assembly, homodimer. Within each dimer, one monomer is responsible for RNA recognition and catalysis, while the other monomer binds to the replacement base PreQ1. It depends on Zn(2+) as a cofactor.

It carries out the reaction 7-aminomethyl-7-carbaguanine + guanosine(34) in tRNA = 7-aminomethyl-7-carbaguanosine(34) in tRNA + guanine. It functions in the pathway tRNA modification; tRNA-queuosine biosynthesis. Catalyzes the base-exchange of a guanine (G) residue with the queuine precursor 7-aminomethyl-7-deazaguanine (PreQ1) at position 34 (anticodon wobble position) in tRNAs with GU(N) anticodons (tRNA-Asp, -Asn, -His and -Tyr). Catalysis occurs through a double-displacement mechanism. The nucleophile active site attacks the C1' of nucleotide 34 to detach the guanine base from the RNA, forming a covalent enzyme-RNA intermediate. The proton acceptor active site deprotonates the incoming PreQ1, allowing a nucleophilic attack on the C1' of the ribose to form the product. After dissociation, two additional enzymatic reactions on the tRNA convert PreQ1 to queuine (Q), resulting in the hypermodified nucleoside queuosine (7-(((4,5-cis-dihydroxy-2-cyclopenten-1-yl)amino)methyl)-7-deazaguanosine). This Koribacter versatilis (strain Ellin345) protein is Queuine tRNA-ribosyltransferase.